Reading from the N-terminus, the 141-residue chain is VLSASDKSNVKAAFGKIGGQAGDLGGQALERMFITYPQTKTYFPHFDLSHGSAQIKGHGKKVAEALVEAANHIDDIAGALSKLSDLHAQKLRVDPVNFKLLGHCFLVVVAAHFPSLLTPEVHASLDKFVLAVGTVLTAKYR.

The Globin domain occupies 1–141; the sequence is VLSASDKSNV…VGTVLTAKYR (141 aa). Position 58 (H58) interacts with O2. Residue H87 coordinates heme b.

The protein belongs to the globin family. In terms of assembly, heterotetramer of two alpha chains and two beta chains. As to expression, red blood cells.

Involved in oxygen transport from the lung to the various peripheral tissues. This Streptopelia orientalis (Eastern turtle dove) protein is Hemoglobin subunit alpha-A (HBAA).